The chain runs to 336 residues: tRNA N6-adenosine threonylcarbamoyltransferase (336 aa).

Positions 114 and 118 each coordinate Fe cation. Substrate-binding positions include 136–140 (LVSGG), D169, G182, D186, and N275. A Fe cation-binding site is contributed by D301.

Belongs to the KAE1 / TsaD family. Requires Fe(2+) as cofactor.

The protein resides in the cytoplasm. The catalysed reaction is L-threonylcarbamoyladenylate + adenosine(37) in tRNA = N(6)-L-threonylcarbamoyladenosine(37) in tRNA + AMP + H(+). In terms of biological role, required for the formation of a threonylcarbamoyl group on adenosine at position 37 (t(6)A37) in tRNAs that read codons beginning with adenine. Is involved in the transfer of the threonylcarbamoyl moiety of threonylcarbamoyl-AMP (TC-AMP) to the N6 group of A37, together with TsaE and TsaB. TsaD likely plays a direct catalytic role in this reaction. This chain is tRNA N6-adenosine threonylcarbamoyltransferase, found in Streptococcus pneumoniae serotype 19F (strain G54).